The primary structure comprises 156 residues: ATP synthase subunit b (156 aa).

A helical transmembrane segment spans residues 11-31 (AIAFAIFVMFCMKFVWPPLIG).

This sequence belongs to the ATPase B chain family. F-type ATPases have 2 components, F(1) - the catalytic core - and F(0) - the membrane proton channel. F(1) has five subunits: alpha(3), beta(3), gamma(1), delta(1), epsilon(1). F(0) has three main subunits: a(1), b(2) and c(10-14). The alpha and beta chains form an alternating ring which encloses part of the gamma chain. F(1) is attached to F(0) by a central stalk formed by the gamma and epsilon chains, while a peripheral stalk is formed by the delta and b chains.

The protein resides in the cell inner membrane. F(1)F(0) ATP synthase produces ATP from ADP in the presence of a proton or sodium gradient. F-type ATPases consist of two structural domains, F(1) containing the extramembraneous catalytic core and F(0) containing the membrane proton channel, linked together by a central stalk and a peripheral stalk. During catalysis, ATP synthesis in the catalytic domain of F(1) is coupled via a rotary mechanism of the central stalk subunits to proton translocation. In terms of biological role, component of the F(0) channel, it forms part of the peripheral stalk, linking F(1) to F(0). In Psychrobacter cryohalolentis (strain ATCC BAA-1226 / DSM 17306 / VKM B-2378 / K5), this protein is ATP synthase subunit b.